We begin with the raw amino-acid sequence, 626 residues long: ATP-dependent zinc metalloprotease FtsH 3 (626 aa).

Topologically, residues 1–7 (MNKLFRS) are cytoplasmic. A helical membrane pass occupies residues 8 to 28 (LAFYMLILVISVAIAVQLGGT). The Extracellular segment spans residues 29-103 (SQQTTQLVYS…LDFRQDNTSG (75 aa)). Residues 104–124 (IWAMLLQTLVPVVLVLLAFFF) form a helical membrane-spanning segment. Residues 125 to 626 (IMQQTQGSGN…GGTSQVAPAF (502 aa)) are Cytoplasmic-facing. Residue 197–204 (GPPGTGKT) coordinates ATP. Residue H420 participates in Zn(2+) binding. The active site involves E421. Zn(2+) contacts are provided by H424 and D496. The tract at residues 602–626 (PPRPKPEPLKPRMVGGGTSQVAPAF) is disordered.

This sequence in the central section; belongs to the AAA ATPase family. The protein in the C-terminal section; belongs to the peptidase M41 family. As to quaternary structure, homohexamer. Zn(2+) serves as cofactor.

It localises to the cell membrane. Its function is as follows. Acts as a processive, ATP-dependent zinc metallopeptidase for both cytoplasmic and membrane proteins. Plays a role in the quality control of integral membrane proteins. The protein is ATP-dependent zinc metalloprotease FtsH 3 of Symbiobacterium thermophilum (strain DSM 24528 / JCM 14929 / IAM 14863 / T).